We begin with the raw amino-acid sequence, 170 residues long: Translationally-controlled tumor protein homolog (170 aa).

The TCTP domain maps to 1–170 (MLIYNDILNG…WKHGLKETKV (170 aa)).

Belongs to the TCTP family.

It localises to the cytoplasm. It is found in the cytoskeleton. Functionally, involved in protein synthesis. Involved in microtubule stabilization. This Gibberella zeae (strain ATCC MYA-4620 / CBS 123657 / FGSC 9075 / NRRL 31084 / PH-1) (Wheat head blight fungus) protein is Translationally-controlled tumor protein homolog.